Here is a 592-residue protein sequence, read N- to C-terminus: ATP-binding protein Uup (592 aa).

ABC transporter domains are found at residues 1–221 (MPLI…RIEK) and 289–516 (FKLK…KSNI). Residues 36-43 (GKNGAGKS) and 321-328 (GNNGSGKS) each bind ATP. Residues 516–550 (ISFLKTKQNQVKKELKKVLNEIEKIENSIKTLKIQ) adopt a coiled-coil conformation. Positions 518 to 592 (FLKTKQNQVK…IYWENLEKKL (75 aa)) are C-terminal domain (CTD), binds DNA.

Belongs to the ABC transporter superfamily. ABCF family. Uup subfamily.

It is found in the cytoplasm. It carries out the reaction ATP + H2O = ADP + phosphate + H(+). Probably plays a role in ribosome assembly or function. May be involved in resolution of branched DNA intermediates that result from template switching in postreplication gaps. Binds DNA and has ATPase activity. This is ATP-binding protein Uup from Buchnera aphidicola subsp. Schizaphis graminum (strain Sg).